The sequence spans 303 residues: Methionyl-tRNA formyltransferase (303 aa).

108–111 (SDLP) provides a ligand contact to (6S)-5,6,7,8-tetrahydrofolate.

The protein belongs to the Fmt family.

It carries out the reaction L-methionyl-tRNA(fMet) + (6R)-10-formyltetrahydrofolate = N-formyl-L-methionyl-tRNA(fMet) + (6S)-5,6,7,8-tetrahydrofolate + H(+). Its function is as follows. Attaches a formyl group to the free amino group of methionyl-tRNA(fMet). The formyl group appears to play a dual role in the initiator identity of N-formylmethionyl-tRNA by promoting its recognition by IF2 and preventing the misappropriation of this tRNA by the elongation apparatus. The chain is Methionyl-tRNA formyltransferase from Rickettsia peacockii (strain Rustic).